The chain runs to 343 residues: GTPase Obg (343 aa).

The Obg domain maps to 1 to 159 (MKFLDQAKVY…LNIWLRLKLI (159 aa)). Residues 160–327 (ADAGLVGLPN…VLRALMTVIA (168 aa)) form the OBG-type G domain. GTP is bound by residues 166-173 (GLPNAGKS), 191-195 (FTTLH), 212-215 (DIPG), 279-282 (SQVD), and 308-310 (SAV). S173 and T193 together coordinate Mg(2+).

The protein belongs to the TRAFAC class OBG-HflX-like GTPase superfamily. OBG GTPase family. As to quaternary structure, monomer. It depends on Mg(2+) as a cofactor.

The protein localises to the cytoplasm. An essential GTPase which binds GTP, GDP and possibly (p)ppGpp with moderate affinity, with high nucleotide exchange rates and a fairly low GTP hydrolysis rate. Plays a role in control of the cell cycle, stress response, ribosome biogenesis and in those bacteria that undergo differentiation, in morphogenesis control. The polypeptide is GTPase Obg (Mesorhizobium japonicum (strain LMG 29417 / CECT 9101 / MAFF 303099) (Mesorhizobium loti (strain MAFF 303099))).